The sequence spans 37 residues: Large ribosomal subunit protein bL36 (37 aa).

This sequence belongs to the bacterial ribosomal protein bL36 family.

The polypeptide is Large ribosomal subunit protein bL36 (Heliobacterium modesticaldum (strain ATCC 51547 / Ice1)).